The chain runs to 219 residues: Phosphatidylserine decarboxylase proenzyme (219 aa).

The active-site Schiff-base intermediate with substrate; via pyruvic acid is Ser-188. Residue Ser-188 is modified to Pyruvic acid (Ser); by autocatalysis.

It belongs to the phosphatidylserine decarboxylase family. PSD-A subfamily. As to quaternary structure, heterodimer of a large membrane-associated beta subunit and a small pyruvoyl-containing alpha subunit. It depends on pyruvate as a cofactor. Is synthesized initially as an inactive proenzyme. Formation of the active enzyme involves a self-maturation process in which the active site pyruvoyl group is generated from an internal serine residue via an autocatalytic post-translational modification. Two non-identical subunits are generated from the proenzyme in this reaction, and the pyruvate is formed at the N-terminus of the alpha chain, which is derived from the carboxyl end of the proenzyme. The post-translation cleavage follows an unusual pathway, termed non-hydrolytic serinolysis, in which the side chain hydroxyl group of the serine supplies its oxygen atom to form the C-terminus of the beta chain, while the remainder of the serine residue undergoes an oxidative deamination to produce ammonia and the pyruvoyl prosthetic group on the alpha chain.

It localises to the cell membrane. It carries out the reaction a 1,2-diacyl-sn-glycero-3-phospho-L-serine + H(+) = a 1,2-diacyl-sn-glycero-3-phosphoethanolamine + CO2. It functions in the pathway phospholipid metabolism; phosphatidylethanolamine biosynthesis; phosphatidylethanolamine from CDP-diacylglycerol: step 2/2. Functionally, catalyzes the formation of phosphatidylethanolamine (PtdEtn) from phosphatidylserine (PtdSer). The sequence is that of Phosphatidylserine decarboxylase proenzyme from Geobacter sp. (strain M21).